The sequence spans 359 residues: 4-galactosyl-N-acetylglucosaminide 3-alpha-L-fucosyltransferase 9 (359 aa).

The Cytoplasmic portion of the chain corresponds to Met-1–Pro-11. A helical; Signal-anchor for type II membrane protein membrane pass occupies residues Phe-12 to Pro-32. At Thr-33–Asn-359 the chain is on the lumenal side. Residue Asn-62 is glycosylated (N-linked (GlcNAc...) asparagine). An acceptor-binding region spans residues Glu-63–Tyr-168. Gln-75 contacts a beta-D-galactosyl-(1-&gt;4)-N-acetyl-beta-D-glucosaminyl derivative. Intrachain disulfides connect Cys-82–Cys-335, Cys-91–Cys-338, and Cys-190–Cys-238. An N-linked (GlcNAc...) asparagine glycan is attached at Asn-101. A beta-D-galactosyl-(1-&gt;4)-N-acetyl-beta-D-glucosaminyl derivative is bound at residue Glu-137. The Nucleophile role is filled by Glu-137. Glu-137 is a binding site for GDP-beta-L-fucose. N-linked (GlcNAc...) asparagine glycosylation is present at Asn-153. GDP-beta-L-fucose-binding residues include Tyr-168, Val-192, Ser-194, Asn-195, Arg-202, Val-226, Tyr-241, Asn-246, Tyr-252, Glu-255, and Lys-256. The segment at Gly-169–Leu-326 is donor-binding. Residues Pro-327–Asn-359 form an acceptor-binding region.

The protein belongs to the glycosyltransferase 10 family. In terms of assembly, homodimer. N-glycosylated with complex-type N-glycans.

It is found in the golgi apparatus. The protein resides in the trans-Golgi network membrane. Its subcellular location is the golgi apparatus membrane. The enzyme catalyses a beta-D-galactosyl-(1-&gt;4)-N-acetyl-beta-D-glucosaminyl derivative + GDP-beta-L-fucose = a beta-D-galactosyl-(1-&gt;4)-[alpha-L-fucosyl-(1-&gt;3)]-N-acetyl-beta-D-glucosaminyl derivative + GDP + H(+). The catalysed reaction is an alpha-Neu5Ac-(2-&gt;3)-beta-D-Gal-(1-&gt;4)-beta-D-GlcNAc-(1-&gt;3)-beta-D-Gal-(1-&gt;4)-beta-D-GlcNAc derivative + GDP-beta-L-fucose = an alpha-Neu5Ac-(2-&gt;3)-beta-D-Gal-(1-&gt;4)-beta-D-GlcNAc-(1-&gt;3)-beta-D-Gal-(1-&gt;4)-[alpha-L-Fuc-(1-&gt;3)]-beta-D-GlcNAc derivative + GDP + H(+). It carries out the reaction alpha-N-glycoloylneuraminosyl-(2-&gt;3)-beta-D-galactosyl-(1-&gt;4)-N-acetyl-beta-D-glucosaminyl-(1-&gt;3)-beta-D-galactosyl-(1-&gt;4)-N-acetyl-beta-D-glucosaminyl-(1-&gt;3)-beta-D-galactosyl-(1-&gt;4)-beta-D-glucosyl-(1&lt;-&gt;1')-ceramide + GDP-beta-L-fucose = alpha-N-glycoloylneuraminosyl-(2-&gt;3)-beta-D-galactosyl-(1-&gt;4)-N-acetyl-beta-D-glucosaminyl-(1-&gt;3)-beta-D-galactosyl-(1-&gt;4)-[alpha-L-fucosyl-(1-&gt;3)]-N-acetyl-beta-D-glucosaminyl-(1-&gt;3)-beta-D-galactosyl-(1-&gt;4)-beta-D-glucosyl-(1&lt;-&gt;1')-ceramide + GDP + H(+). It catalyses the reaction alpha-D-galactosyl-(1-&gt;3)-beta-D-galactosyl-(1-&gt;4)-N-acetyl-beta-D-glucosaminyl-(1-&gt;3)-beta-D-galactosyl-(1-&gt;4)-beta-D-glucosyl-(1&lt;-&gt;1')-ceramide + GDP-beta-L-fucose = a neolactoside IV(3)-alpha-Gal,III(3)-alpha-Fuc-nLc4Cer + GDP + H(+). The enzyme catalyses a neolactoside nLc4Cer + GDP-beta-L-fucose = a neolactoside III(3)-alpha-Fuc-nLc4Cer + GDP + H(+). The catalysed reaction is an N-acetyl-alpha-neuraminyl-(2-&gt;3)-beta-D-galactosyl-(1-&gt;4)-N-acetyl-beta-D-glucosaminyl derivative + GDP-beta-L-fucose = an alpha-Neu5Ac-(2-&gt;3)-beta-D-Gal-(1-&gt;4)-[alpha-L-Fuc-(1-&gt;3)]-beta-D-GlcNAc derivative + GDP + H(+). It carries out the reaction beta-D-Gal-(1-&gt;4)-beta-D-GlcNAc-(1-&gt;3)-beta-D-Gal-(1-&gt;4)-D-Glc + GDP-beta-L-fucose = beta-D-Gal-(1-&gt;4)-[alpha-L-Fuc-(1-&gt;3)]-beta-D-GlcNAc-(1-&gt;3)-beta-D-Gal-(1-&gt;4)-D-Glc + GDP + H(+). It catalyses the reaction an alpha-L-Fuc-(1-&gt;2)-beta-D-Gal-(1-&gt;4)-beta-D-GlcNAc derivative + GDP-beta-L-fucose = an alpha-L-Fuc-(1-&gt;2)-beta-D-Gal-(1-&gt;4)-[alpha-L-Fuc-(1-&gt;3)]-beta-D-GlcNAc derivative + GDP + H(+). The protein operates within protein modification; protein glycosylation. Its pathway is glycolipid biosynthesis. Activated by Mn2+. Catalyzes alpha(1-&gt;3) linkage of fucosyl moiety transferred from GDP-beta-L-fucose to N-acetyl glucosamine (GlcNAc) within type 2 lactosamine (LacNAc, beta-D-Gal-(1-&gt;4)-beta-D-GlcNAc-) glycan attached to glycolipids and N- or O-linked glycoproteins. Fucosylates distal type 2 LacNAc and its fucosylated (H-type 2 LacNAc) and sialylated (sialyl-type 2 LacNAc) derivatives to form Lewis x (Lex) (CD15) and Lewis y (Ley) antigenic epitopes involved in cell adhesion and differentiation. Generates Lex epitopes in the brain, presumably playing a role in the maintenance of neuronal stemness and neurite outgrowth in progenitor neural cells. Fucosylates the internal type 2 LacNAc unit of the polylactosamine chain to form VIM-2 antigen that serves as recognition epitope for SELE. Can also modify milk oligosaccharides in particular type 2 tetrasaccharide LNnT. In Canis lupus familiaris (Dog), this protein is 4-galactosyl-N-acetylglucosaminide 3-alpha-L-fucosyltransferase 9.